A 1025-amino-acid chain; its full sequence is Error-prone DNA polymerase (1025 aa).

Belongs to the DNA polymerase type-C family. DnaE2 subfamily.

It is found in the cytoplasm. It carries out the reaction DNA(n) + a 2'-deoxyribonucleoside 5'-triphosphate = DNA(n+1) + diphosphate. In terms of biological role, DNA polymerase involved in damage-induced mutagenesis and translesion synthesis (TLS). It is not the major replicative DNA polymerase. In Pseudomonas fluorescens (strain Pf0-1), this protein is Error-prone DNA polymerase.